A 272-amino-acid chain; its full sequence is 3-methyl-2-oxobutanoate hydroxymethyltransferase (272 aa).

2 residues coordinate Mg(2+): Asp-42 and Asp-86. Residues 42–43 (DS), Asp-86, and Lys-116 each bind 3-methyl-2-oxobutanoate. A Mg(2+)-binding site is contributed by Glu-118. Residue Glu-185 is the Proton acceptor of the active site.

Belongs to the PanB family. As to quaternary structure, homodecamer; pentamer of dimers. The cofactor is Mg(2+).

The protein localises to the cytoplasm. It catalyses the reaction 3-methyl-2-oxobutanoate + (6R)-5,10-methylene-5,6,7,8-tetrahydrofolate + H2O = 2-dehydropantoate + (6S)-5,6,7,8-tetrahydrofolate. It functions in the pathway cofactor biosynthesis; (R)-pantothenate biosynthesis; (R)-pantoate from 3-methyl-2-oxobutanoate: step 1/2. In terms of biological role, catalyzes the reversible reaction in which hydroxymethyl group from 5,10-methylenetetrahydrofolate is transferred onto alpha-ketoisovalerate to form ketopantoate. In Prochlorococcus marinus (strain MIT 9303), this protein is 3-methyl-2-oxobutanoate hydroxymethyltransferase.